The primary structure comprises 635 residues: Voltage-gated potassium channel KCNC4 (635 aa).

Residues 1 to 24 (MISSVCVSSYRGRKSGNKPPSKTC) are disordered. Residues 1–28 (MISSVCVSSYRGRKSGNKPPSKTCLKEE) are inactivation gate. Residues 1–226 (MISSVCVSSY…EDPYSSRAAR (226 aa)) are Cytoplasmic-facing. Residues serine 8, serine 9, serine 15, and serine 21 each carry the phosphoserine modification. Positions 116, 122, 143, and 144 each coordinate Zn(2+). The segment at 160-180 (IFESPDGGGSGAGPSDEAGDD) is disordered. The helical transmembrane segment at 227-247 (VVAFASLFFILVSITTFCLET) threads the bilayer. N-linked (GlcNAc...) asparagine glycosylation is found at asparagine 256 and asparagine 265. A helical transmembrane segment spans residues 278-298 (EPILTYIEGVCVLWFTLEFLV). The Cytoplasmic segment spans residues 299–312 (RIVCCPDTLDFVKN). A helical membrane pass occupies residues 313–333 (LLNIIDFVAILPFYLEVGLSG). Residues 345–364 (FLRVVRFVRILRIFKLTRHF) traverse the membrane as a helical; Voltage-sensor segment. Residues 365-380 (VGLRVLGHTLRASTNE) lie on the Cytoplasmic side of the membrane. A helical membrane pass occupies residues 381–401 (FLLLIIFLALGVLIFATMIYY). The K(+) site is built by threonine 436, leucine 437, glycine 438, and tyrosine 439. The Selectivity filter signature appears at 436 to 441 (TLGYGD). Residues 452-472 (VGALCALAGVLTIAMPVPVIV) traverse the membrane as a helical segment. Residues 473–635 (NNFGMYYSLA…PTAGTLFLPH (163 aa)) are Cytoplasmic-facing. The interval 490 to 580 (KKRKKHVPRP…RRALRRSTTR (91 aa)) is disordered. The span at 527 to 542 (AREEGMIERKRADSKQ) shows a compositional bias: basic and acidic residues.

Belongs to the potassium channel family. C (Shaw) (TC 1.A.1.2) subfamily. Kv3.4/KCNC4 sub-subfamily. Homotetramer. Heterotetramer of potassium channel proteins. Post-translationally, phosphorylation of serine residues in the inactivation gate inhibits rapid channel closure.

The protein resides in the membrane. It carries out the reaction K(+)(in) = K(+)(out). Functionally, voltage-gated potassium channel that opens in response to the voltage difference across the membrane, forming a potassium-selective channel through which potassium ions pass in accordance with their electrochemical gradient. The channel displays rapid activation and inactivation kinetics. The protein is Voltage-gated potassium channel KCNC4 of Homo sapiens (Human).